The chain runs to 588 residues: L-fucose isomerase (588 aa).

Residues glutamate 335 and aspartate 359 each act as proton acceptor in the active site. Positions 335, 359, and 525 each coordinate Mn(2+).

The protein belongs to the L-fucose isomerase family. Requires Mn(2+) as cofactor.

Its subcellular location is the cytoplasm. It catalyses the reaction L-fucose = L-fuculose. It functions in the pathway carbohydrate degradation; L-fucose degradation; L-lactaldehyde and glycerone phosphate from L-fucose: step 1/3. Converts the aldose L-fucose into the corresponding ketose L-fuculose. This is L-fucose isomerase from Streptococcus pneumoniae (strain ATCC 700669 / Spain 23F-1).